The primary structure comprises 206 residues: Small ribosomal subunit protein uS7 (206 aa).

Belongs to the universal ribosomal protein uS7 family. As to quaternary structure, component of the small ribosomal subunit.

It is found in the cytoplasm. In terms of biological role, component of the small ribosomal subunit. The ribosome is a large ribonucleoprotein complex responsible for the synthesis of proteins in the cell. This Entamoeba histolytica (strain ATCC 30459 / HM-1:IMSS / ABRM) protein is Small ribosomal subunit protein uS7.